Reading from the N-terminus, the 103-residue chain is NADH-quinone oxidoreductase subunit K (103 aa).

3 helical membrane-spanning segments follow: residues 5-25, 30-50, and 66-86; these read ISSY…GALT, VVVL…LVAF, and LFTM…LIAL.

Belongs to the complex I subunit 4L family. In terms of assembly, NDH-1 is composed of 14 different subunits. Subunits NuoA, H, J, K, L, M, N constitute the membrane sector of the complex.

The protein resides in the cell membrane. The enzyme catalyses a quinone + NADH + 5 H(+)(in) = a quinol + NAD(+) + 4 H(+)(out). NDH-1 shuttles electrons from NADH, via FMN and iron-sulfur (Fe-S) centers, to quinones in the respiratory chain. The immediate electron acceptor for the enzyme in this species is believed to be a menaquinone. Couples the redox reaction to proton translocation (for every two electrons transferred, four hydrogen ions are translocated across the cytoplasmic membrane), and thus conserves the redox energy in a proton gradient. The polypeptide is NADH-quinone oxidoreductase subunit K (Brevibacillus brevis (strain 47 / JCM 6285 / NBRC 100599)).